The sequence spans 302 residues: N-acetyl-D-glucosamine kinase (302 aa).

Residues Gly-4 to Lys-11 and Gly-133 to Tyr-140 contribute to the ATP site. His-157, Cys-177, Cys-179, and Cys-184 together coordinate Zn(2+).

The protein belongs to the ROK (NagC/XylR) family. NagK subfamily.

It carries out the reaction N-acetyl-D-glucosamine + ATP = N-acetyl-D-glucosamine 6-phosphate + ADP + H(+). The protein operates within cell wall biogenesis; peptidoglycan recycling. Functionally, catalyzes the phosphorylation of N-acetyl-D-glucosamine (GlcNAc) derived from cell-wall degradation, yielding GlcNAc-6-P. This Vibrio atlanticus (strain LGP32) (Vibrio splendidus (strain Mel32)) protein is N-acetyl-D-glucosamine kinase.